The sequence spans 5376 residues: Zonadhesin (5376 aa).

The signal sequence occupies residues 1–17; sequence MALPVWTLMLLVGAAWG. The Extracellular portion of the chain corresponds to 18–5310; that stretch reads QEQVPAWRPN…TTRKKIEASS (5293 aa). 3 MAM domains span residues 45–210, 215–374, and 377–542; these read SKCD…TCNQ, QMCT…PCGE, and PQCD…PCRV. 2 N-linked (GlcNAc...) asparagine glycosylation sites follow: Asn339 and Asn499. Residues 547–1170 form an 80 X heptapeptide repeats (approximate) (mucin-like domain) region; the sequence is EIPSSPLLPP…PTTGVSTTES (624 aa). 2 disordered regions span residues 553-579 and 1037-1113; these read LLPPTGPSESTVPTLPMEQPTSPTKAT and TVPP…TVST. Low complexity predominate over residues 1052–1113; the sequence is TEVTTTPPEE…IASEETTVST (62 aa). One can recognise a TIL 1 domain in the interval 1171-1220; that stretch reads CPPNAHIELCACPASCESPKPSCQPPCIPGCVCNPGFLFSNNQCINESSC. Asn1216, Asn1239, and Asn1314 each carry an N-linked (GlcNAc...) asparagine glycan. Residues 1227–1275 enclose the VWFC 1 domain; that stretch reads KHYKPGEEWFTPNCTERCRCLPGSLMECQISQCGTHTVCQLKSDQYQCE. The 183-residue stretch at 1280 to 1462 folds into the VWFD 1 domain; that stretch reads ATCLVYGDLH…DKDWVSSRCQ (183 aa). 2 disulfide bridges follow: Cys1282/Cys1417 and Cys1304/Cys1461. Positions 1555 to 1608 constitute a TIL 2 domain; sequence CPKNSRYSLCAKPCPETCHPISTTQHCSDKCVEGCECDPGFILSGSECVPSSQC. In terms of domain architecture, VWFC 2 spans 1609–1664; the sequence is GCTSFQGRYFKLQEQWFNPDCKEICTCESHNHILCKPWKCKAQEACSYKNGVLGCH. The VWFD 2 domain maps to 1669 to 1849; it reads ATCMVSGDPH…ILEASDPGCF (181 aa). 2 disulfide bridges follow: Cys1671/Cys1809 and Cys1693/Cys1848. Asn1814, Asn1908, and Asn1933 each carry an N-linked (GlcNAc...) asparagine glycan. The 55-residue stretch at 1941-1995 folds into the TIL 3 domain; the sequence is CPPRSSYNPCANSCPATCLTLSTPRDCPTLPCVEGCECQSGHILSGTTCVPLRQC. The region spanning 1996 to 2052 is the VWFC 3 domain; the sequence is GCSDQDGSYHLLGESWYTEKTCTTLCTCSAHSNITCSPTACKANHVCLRQEGLLRCA. N-linked (GlcNAc...) asparagine glycosylation is found at Asn2028, Asn2111, Asn2142, and Asn2332. The region spanning 2056-2239 is the VWFD 3 domain; sequence GECRISEDSQ…KDKSMDPNCQ (184 aa). Cystine bridges form between Cys2058–Cys2200 and Cys2080–Cys2238. Residues 2340 to 2398 enclose the TIL 4 domain; it reads CPAHSHYTNCLPSCPPSCLDPDSRCEGSGHKVPATCREGCICQPDYVLLNDKCVLRSHC. The VWFC 4 domain occupies 2399–2454; the sequence is GCKDAQGVFIPAGKTWISEDCTQSCTCMKGSMRCWDFQCPPGTYCKNSNDGSSNCV. The 59-residue stretch at 2460 to 2518 folds into the TIL 5 domain; that stretch reads CPAHSKFTDCLPPCHPSCSDPDGHCEGISTNAHSNCKEGCVCQPGYVLRNDKCVLRIEC. The region spanning 2519-2574 is the VWFC 5 domain; sequence GCQHTQGGFIPAGKNWTSRGCSQSCDCMEGVIRCQNFQCPSGTYCQDIEDGTSNCA. N-linked (GlcNAc...) asparagine glycans are attached at residues Asn2533 and Asn2575. Residues 2580–2638 enclose the TIL 6 domain; that stretch reads CPAHSSFTNCLPPCQPSCSDPEGHCGGSTTKAPSACQEGCVCEPDYVVLNNKCVPRIEC. The 56-residue stretch at 2639–2694 folds into the VWFC 6 domain; the sequence is GCKDAQGVLIPADKIWINKGCTQTCACVTGTIHCRDFQCPSGTYCKDIKDDASNCT. Asn2692 carries N-linked (GlcNAc...) asparagine glycosylation. A TIL 7 domain is found at 2700–2758; it reads CPDHSLYTHCLPSCLLSCSDPDGLCRGTSPEAPSTCKEGCVCDPDYVLSNDKCVLRIEC. The region spanning 2759–2814 is the VWFC 7 domain; that stretch reads GCKDAQGVLIPAGKTWINRGCTQSCSCMGGAIQCQNFKCPSEAYCQDMEDGNSNCT. N-linked (GlcNAc...) asparagine glycosylation occurs at Asn2812. The TIL 8 domain occupies 2820–2878; sequence CPAHSHYTNCLPTCQPSCSDPDGHCEGSSTKAPSACKEGCVCEPDYVMLNNKCVPRIEC. Residues 2879–2934 form the VWFC 8 domain; it reads GCKDTQGVLIPADKTWINRGCTQSCTCRGGAIQCQKYHCSSGTYCKDMEDDSSSCA. The 59-residue stretch at 2940–2998 folds into the TIL 9 domain; sequence CPAHSHFTNCLPPCQPSCLDSEGHCEGSTTKAPSACQEGCVCEPDYVVLNNKCVPRIEC. The VWFC 9 domain occupies 2999–3054; the sequence is GCKDAQGVLIPADKTWINRGCTQSCTCKGGAIQCQKFQCPSETYCKDIEDGNSNCT. N-linked (GlcNAc...) asparagine glycosylation is found at Asn3052, Asn3065, Asn3144, and Asn3172. The region spanning 3060–3118 is the TIL 10 domain; that stretch reads CPANSNFTSCLPSCQPSCSNTDVHCEGSSPNTLSSCREGCVCQSGYVLHNDKCILRNQC. In terms of domain architecture, VWFC 10 spans 3119-3174; sequence GCKDAQGALIPEGKTWITSGCTQSCNCTGGAIQCQNFQCPLKTYCKDLKDGSSNCT. In terms of domain architecture, TIL 11 spans 3180–3238; that stretch reads CPAHSRYTNCLPSCPPLCLDPEGLCEGTSPKVPSTCREGCICQPGYLMHKNKCVLRIFC. The VWFC 11 domain maps to 3239-3294; it reads GCKNTQGAFISADKTWISRGCTQSCTCPAGAIHCRNFKCPSGTYCKNGDNGSSNCT. N-linked (GlcNAc...) asparagine glycosylation is found at Asn3288 and Asn3292. A TIL 12 domain is found at 3300 to 3355; it reads CPTNSQFTDCLPSCVPSCSNRCEVTSPSVPSSCREGCLCNHGFVFSEDKCVPRTQC. In terms of domain architecture, VWFC 12 spans 3356–3411; that stretch reads GCKDARGAIIPAGKTWTSKGCTQSCACVEGNIQCQNFQCPPETYCKDNSEGSSTCT. Residues 3417–3475 enclose the TIL 13 domain; that stretch reads CPAHTQYTSCLPSCLPSCLDPEGLCKDISPKVPSTCKEGCVCQSGYVLNSDKCVLRAEC. Positions 3476-3531 constitute a VWFC 13 domain; sequence DCKDAQGALIPAGKTWTSPGCTQSCACMGGAVQCQSSQCPPGTYCKDNEDGNSNCA. One can recognise a TIL 14 domain in the interval 3537 to 3595; that stretch reads CPAHSLFTNCLPPCLPSCLDPDGLCKGASPKVPSTCKEGCICQSGYVLSNNKCLLRNRC. A VWFC 14 domain is found at 3596 to 3651; sequence GCKDAHGALIPEDKTWVSRGCTQSCVCTGGSIQCLSSQCPPGAYCKDNEDGSSNCA. Residues 3657–3715 form the TIL 15 domain; it reads CPANSHYTDCFPPCPPSCSDPEGHCEASGPRVLSTCREGCLCNPGFVLDRDKCVPRVEC. The VWFC 15 domain occupies 3716 to 3771; sequence GCKDAQGALIPSGKTWTSPGCTQSCACMGGVVQCQSSQCPPGTYCKDNEDGNSNCA. The 59-residue stretch at 3777–3835 folds into the TIL 16 domain; that stretch reads CPTHSNYTDCLPFCLPSCLDPSALCGGTSPKGPSTCKEGCVCQPGYVLDKDKCILKIEC. Asn3782 carries an N-linked (GlcNAc...) asparagine glycan. A VWFC 16 domain is found at 3836–3891; the sequence is GCRDTQGAVIPAGKTWLSTGCIQSCACVEGTIQCQNFQCPPGTYCNHNNNCAKIPL. One can recognise a TIL 17 domain in the interval 3893–3951; that stretch reads CPAHSHFTSCLPSCPPSCANLDGSCEQTSPKVPSTCKEGCLCQPGYFLNNGKCVLQTHC. A VWFC 17 domain is found at 3952–4007; sequence DCKDAEGGLVPAGKTWTSKDCTQSCACTGGAVQCQNFQCPLGTYCKDSGDGSSNCT. A glycan (N-linked (GlcNAc...) asparagine) is linked at Asn4005. Positions 4029-4087 constitute a TIL 18 domain; that stretch reads CPAHSHFTSCLPSCPPSCSNLDGSCVESNFKAPSVCKKGCICQPGYLLNNDKCVLRIQC. The region spanning 4088-4143 is the VWFC 18 domain; it reads GCKDTQGGLIPAGRTWISSDCTKSCSCMGGIIQCRDFQCPPGTYCKESNDSSRTCA. Asn4136 carries N-linked (GlcNAc...) asparagine glycosylation. The TIL 19 domain maps to 4149-4207; that stretch reads CPAHSHYTNCLPACSRSCTDLDGHCEGTSPKVPSPCKEGCLCQPGYVVHNHKCVLQIHC. The VWFC 19 domain maps to 4208–4262; sequence GCKDAQGGFVPAGKTWISRGCTQSCACVGGAVQCHNFTCPTGTQCQNSSCSKITV. Residues Asn4243 and Asn4254 are each glycosylated (N-linked (GlcNAc...) asparagine). Positions 4264 to 4322 constitute a TIL 20 domain; sequence CPAHSQYTTCLPSCLPSCFDPEGLCGGASPRAPSTCREGCVCEADYVLREDKCVLRTQC. The region spanning 4323 to 4378 is the VWFC 20 domain; sequence GCKDAQGDLIPANKTWLTRGCAQKCTCKGGNIHCWNFKCPLGTECKDSVDGGSNCT. Asn4335 and Asn4376 each carry an N-linked (GlcNAc...) asparagine glycan. In terms of domain architecture, TIL 21 spans 4384 to 4442; sequence CPAHSHHTYCLPSCIPSCSNVNDRCESTSLQRPSTCIEGCLCHSGFVFSKDKCVPRTQC. One can recognise a VWFC 21 domain in the interval 4443–4498; the sequence is GCKDSQGTLIPAGKNWITTGCSQRCTCTGGLVQCHDFQCPSGAECQDIEDGNSNCV. The region spanning 4504–4562 is the TIL 22 domain; that stretch reads CPAHSHYSKCLPPCQPSCSDPDGHCEGTSPEAPSTCEEGCVCEPDYVLSNDKCVPSSEC. One can recognise a VWFC 22 domain in the interval 4563 to 4618; it reads GCKDAHGVLIPESKTWVSRGCTKNCTCKGGTVQCHDFSCPTGSRCLDNNEGNSNCV. The N-linked (GlcNAc...) asparagine glycan is linked to Asn4586. The TIL 23 domain occupies 4624-4682; it reads CPAHSLYTNCLPSCLPSCSDPEGLCGGTSPEVPSTCKEGCICQSGYVLHKNKCMLRIHC. The VWFC 23 domain maps to 4683–4738; sequence DCKDFQGSLIKTGQTWISSGCSKICTCKGGFFQCQSYKCPSGTQCEESEDGSSNCV. The TIL 24 domain maps to 4744-4802; sequence CPANSLYTHCLPTCLPSCSNPDGRCEGTSHKAPSTCREGCVCQPGYLLNKDTCVHKNQC. One can recognise a VWFC 24 domain in the interval 4803 to 4858; the sequence is GCKDIRGNIIPAGNTWISSDCTQSCACTDGVIQCQNFVCPSGSHCQYNEDGSSDCA. In terms of domain architecture, VWFD 4 spans 4863–5038; it reads ERCTIFGDPY…SWEVKAQHAF (176 aa). Cys4865 and Cys5001 form a disulfide bridge. Asn5136 is a glycosylation site (N-linked (GlcNAc...) asparagine). A TIL 25 domain is found at 5150 to 5203; that stretch reads CPANTVYQRCMTPCPASCAKFVTPKVCEGPCVEGCASLPGYIYSDTQSLPVTHC. The 55-residue stretch at 5204–5258 folds into the VWFC 25 domain; it reads GCTADGIYYKLGDSFVTNDCSQHCTCASQGILLCEPYGCRAGESCMVANFTRGCF. An N-linked (GlcNAc...) asparagine glycan is attached at Asn5252. The EGF-like domain occupies 5259-5295; the sequence is QDSPCLQNPCHNDGRCEEQGATFICHCDFGYGGEFCT. Intrachain disulfides connect Cys5263-Cys5274, Cys5268-Cys5283, and Cys5285-Cys5294. The chain crosses the membrane as a helical span at residues 5311 to 5337; it reads LVAILPGVLVMVLVPVLLPRVYVYMAT. Over 5338–5376 the chain is Cytoplasmic; that stretch reads RTTMGRRRMKRKEKKLLRQSRLRLEDADVPEPTFKATEF.

In terms of assembly, probably forms covalent oligomers. In terms of tissue distribution, in testis, primarily in haploid spermatids.

The protein resides in the cell membrane. Its function is as follows. Binds in a species-specific manner to the zona pellucida of the egg. May be involved in gamete recognition and/or signaling. In Mus musculus (Mouse), this protein is Zonadhesin (Zan).